We begin with the raw amino-acid sequence, 338 residues long: Anthranilate phosphoribosyltransferase (338 aa).

Residues G81, 84–85 (GD), T89, 91–94 (NIST), 109–117 (KHGNRAVSS), and S121 contribute to the 5-phospho-alpha-D-ribose 1-diphosphate site. Residue G81 coordinates anthranilate. A Mg(2+)-binding site is contributed by S93. Position 112 (N112) interacts with anthranilate. Residue R167 participates in anthranilate binding. Residues D226 and E227 each coordinate Mg(2+).

It belongs to the anthranilate phosphoribosyltransferase family. Homodimer. Mg(2+) is required as a cofactor.

The enzyme catalyses N-(5-phospho-beta-D-ribosyl)anthranilate + diphosphate = 5-phospho-alpha-D-ribose 1-diphosphate + anthranilate. It participates in amino-acid biosynthesis; L-tryptophan biosynthesis; L-tryptophan from chorismate: step 2/5. Catalyzes the transfer of the phosphoribosyl group of 5-phosphorylribose-1-pyrophosphate (PRPP) to anthranilate to yield N-(5'-phosphoribosyl)-anthranilate (PRA). This Myxococcus xanthus (strain DK1622) protein is Anthranilate phosphoribosyltransferase.